A 636-amino-acid chain; its full sequence is Transcription termination factor FttA (636 aa).

A KHa region spans residues 3–70; that stretch reads SEMLEEIKRT…IIIRSDRSVL (68 aa). The segment at 71-138 is KHb; the sequence is MDPEKAIRKI…WAPKILRTPP (68 aa). The metallo-beta-lactamase N-terminus stretch occupies residues 179–383; sequence WARLTAMGGF…LVMESTYGGH (205 aa). Positions 242, 244, 246, 247, 329, and 352 each coordinate Zn(2+). The interval 384 to 577 is beta-Casp; that stretch reads EDVQPSRNRA…MNIKTIEGFS (194 aa). Residues 578–636 are metallo-beta-lactamase C-terminus; it reads GHSDRRQLMEYVKRISPKPEKILLCHGDNYKTLDLASSIYRTYRIETKTPLNLETVRIQ. Histidine 603 contacts Zn(2+).

Belongs to the metallo-beta-lactamase superfamily. RNA-metabolizing metallo-beta-lactamase-like family. FttA subfamily. As to quaternary structure, homodimer. Interacts with RNA polymerase (RNAP), interacts with the Spt4-Spt5 complex. Does not seem to interact with the RNA degrading exosome. The cofactor is Zn(2+).

Its activity is regulated as follows. Most active at 0.5 M or 0.7 M NaCl, less active at 1.0 M NaCl. Nuclease activity is inhibited by N,N,Tetrakis-(2-pyridylmethyl)-ethylene diamine (TPEN), a specific chelator of zinc ions. Its function is as follows. Terminates transcription on the whole genome. Termination is linked to FttA-mediated RNA cleavage and does not require NTP hydrolysis. Cleaves endonucleolytically at the RNA exit channel of RNA polymerase (RNAP); the 5'-3' exonuclease activity of this protein degrades the nascent RNA released from RNAP. An RNA nuclease, it bind single-stranded RNA (ssRNA) with a preference for U-rich sequences. The chain is Transcription termination factor FttA from Methanothermobacter thermautotrophicus (strain ATCC 29096 / DSM 1053 / JCM 10044 / NBRC 100330 / Delta H) (Methanobacterium thermoautotrophicum).